Consider the following 550-residue polypeptide: Selinene synthase (550 aa).

Mg(2+) is bound by residues Asp314, Asp318, Asp450, and Glu458. The DDXXD motif motif lies at 314–318; sequence DDIYD.

This sequence belongs to the terpene synthase family. It depends on Mg(2+) as a cofactor. Requires Mn(2+) as cofactor.

The catalysed reaction is (2E,6E)-farnesyl diphosphate = (+)-beta-selinene + diphosphate. The enzyme catalyses (2E,6E)-farnesyl diphosphate = alpha-selinene + diphosphate. It functions in the pathway secondary metabolite biosynthesis; terpenoid biosynthesis. In terms of biological role, sesquiterpene synthase that catalyzes the formation of alpha- and beta-selinene from trans,trans-farnesyl diphosphate (FPP). Also produces some nerolidol. The protein is Selinene synthase (SES) of Ocimum basilicum (Sweet basil).